The following is a 787-amino-acid chain: LPS-assembly protein LptD (787 aa).

Residues 1 to 78 (MAAGLPPLVV…AAGAAPAESG (78 aa)) form a disordered region. The segment covering 59 to 78 (LPPVGTPAEPAAGAAPAESG) has biased composition (low complexity).

It belongs to the LptD family. Component of the lipopolysaccharide transport and assembly complex. Interacts with LptE and LptA.

In terms of biological role, together with LptE, is involved in the assembly of lipopolysaccharide (LPS) at the surface of the outer membrane. This Aromatoleum aromaticum (strain DSM 19018 / LMG 30748 / EbN1) (Azoarcus sp. (strain EbN1)) protein is LPS-assembly protein LptD.